The sequence spans 353 residues: Zinc transporter 5 (353 aa).

Positions 1 to 27 (MATAAMTKVFVLLFLVAACYLPAHAAA) are cleaved as a signal peptide. Topologically, residues 28–48 (AECDCATDTAGRDKAQALRLK) are extracellular. The chain crosses the membrane as a helical span at residues 49-69 (VIAIFCILAGSTVGAALPSLG). At 70 to 86 (GRFPAIQPETDVFLSVK) the chain is on the cytoplasmic side. Residues 87–107 (AFAGGVILATGLVHILPAAFE) traverse the membrane as a helical segment. Over 108–121 (ALSSPCLVGGPWKR) the chain is Extracellular. The helical transmembrane segment at 122-142 (FPFAGMVAMVSAIGTLIVDTV) threads the bilayer. Residues 143–198 (ATGYFHRTDAKRKAAAVADEPADDLEASDEHSHGHAHGMSVMSVAPAGEEDLVRHR) lie on the Cytoplasmic side of the membrane. The helical transmembrane segment at 199–219 (VISQVLELGVVVHSLIIGMSL) threads the bilayer. Over 220-230 (GASDFPSTVRP) the chain is Extracellular. Residues 231-251 (LVPALTFHQFFEGIGLGGCIV) form a helical membrane-spanning segment. Residues 252-260 (QAKFRVRSV) lie on the Cytoplasmic side of the membrane. Residues 261–281 (VTMALFFSLTTPAGIVVGIGI) traverse the membrane as a helical segment. Topologically, residues 282-292 (SSVYDANSPTA) are extracellular. Residues 293–313 (LVVQGLLEAAAAGILVYMALV) traverse the membrane as a helical segment. Topologically, residues 314–332 (DILAEDFMKTKVQRRGRLQ) are cytoplasmic. The helical transmembrane segment at 333–353 (LAMNVALLLGAGLMSMIAIWA) threads the bilayer.

It belongs to the ZIP transporter (TC 2.A.5) family.

The protein resides in the cell membrane. Its function is as follows. Zinc transporter that mediates zinc uptake from the rhizosphere and may be responsible for the translocation of zinc within the plant. The chain is Zinc transporter 5 (ZIP5) from Oryza sativa subsp. japonica (Rice).